We begin with the raw amino-acid sequence, 250 residues long: Probable cytokinin riboside 5'-monophosphate phosphoribohydrolase LOGL6 (250 aa).

Substrate contacts are provided by residues E98, 116–117 (RK), and 133–139 (GYGTLEE).

Belongs to the LOG family. Expressed in roots, leaves, stems, tiller buds, shoot apex, immature inflorescences and flowers.

The catalysed reaction is N(6)-(dimethylallyl)adenosine 5'-phosphate + H2O = N(6)-dimethylallyladenine + D-ribose 5-phosphate. It carries out the reaction 9-ribosyl-trans-zeatin 5'-phosphate + H2O = trans-zeatin + D-ribose 5-phosphate. Cytokinin-activating enzyme working in the direct activation pathway. Phosphoribohydrolase that converts inactive cytokinin nucleotides to the biologically active free-base forms. The chain is Probable cytokinin riboside 5'-monophosphate phosphoribohydrolase LOGL6 (LOGL6) from Oryza sativa subsp. japonica (Rice).